Reading from the N-terminus, the 299-residue chain is Ribonuclease H2 subunit A (299 aa).

Residue Met1 is modified to N-acetylmethionine. The region spanning 28–250 (PCVLGVDEAG…AQTILEKEAE (223 aa)) is the RNase H type-2 domain. A divalent metal cation is bound by residues Asp34, Glu35, and Asp141. Residues Thr204 and Thr216 each carry the phosphothreonine modification. Ser257 and Ser277 each carry phosphoserine.

This sequence belongs to the RNase HII family. Eukaryotic subfamily. In terms of assembly, the RNase H2 complex is a heterotrimer composed of the catalytic subunit RNASEH2A and the non-catalytic subunits RNASEH2B and RNASEH2C. Mn(2+) serves as cofactor. Requires Mg(2+) as cofactor.

Its subcellular location is the nucleus. It catalyses the reaction Endonucleolytic cleavage to 5'-phosphomonoester.. Catalytic subunit of RNase HII, an endonuclease that specifically degrades the RNA of RNA:DNA hybrids. Participates in DNA replication, possibly by mediating the removal of lagging-strand Okazaki fragment RNA primers during DNA replication. Mediates the excision of single ribonucleotides from DNA:RNA duplexes. The sequence is that of Ribonuclease H2 subunit A (RNASEH2A) from Homo sapiens (Human).